The sequence spans 692 residues: Potassium-transporting ATPase ATP-binding subunit (692 aa).

Transmembrane regions (helical) follow at residues 35–55 (VMFIVFLGALFTTWIFFKDLY), 64–84 (LQISLWLWFTVLFANFAEAIA), 213–233 (IALTMLLSGLSFIFLIAVMSL), and 254–274 (ILISLLVCLIPTTIAGLLSAI). Asp-307 (4-aspartylphosphate intermediate) is an active-site residue. Residues Asp-344, Glu-348, 377–384 (FSASTKMS), and Lys-400 each bind ATP. Residues Asp-523 and Asp-527 each contribute to the Mg(2+) site. Helical transmembrane passes span 592 to 612 (YFAILPALFGSFYAVSEVGPL), 626 to 646 (AVLSAVIFNALVIPALIPLAL), and 672 to 692 (MVIPFLGIKCIDLMLGFLGII).

This sequence belongs to the cation transport ATPase (P-type) (TC 3.A.3) family. Type IA subfamily. As to quaternary structure, the system is composed of three essential subunits: KdpA, KdpB and KdpC.

It is found in the cell inner membrane. The catalysed reaction is K(+)(out) + ATP + H2O = K(+)(in) + ADP + phosphate + H(+). In terms of biological role, part of the high-affinity ATP-driven potassium transport (or Kdp) system, which catalyzes the hydrolysis of ATP coupled with the electrogenic transport of potassium into the cytoplasm. This subunit is responsible for energy coupling to the transport system and for the release of the potassium ions to the cytoplasm. The protein is Potassium-transporting ATPase ATP-binding subunit of Leptospira interrogans serogroup Icterohaemorrhagiae serovar Lai (strain 56601).